Here is a 527-residue protein sequence, read N- to C-terminus: F-box-like/WD repeat-containing protein TBL1X (527 aa).

Serine 2 is subject to N-acetylserine. One can recognise a LisH domain in the interval 4-36; that stretch reads TSDEVNFLVYRYLQESGFSHSAFTFGIESHISQ. The F-box-like domain maps to 41–86; it reads GTLVPPAALISILQKGLQYVEAEISINEDGTVFDGRPIESLSLIDA. Lysine 102 carries the N6-acetyllysine modification. Positions 127–164 are disordered; sequence TTPAAAAQQNPPKNGEATVNGEENGAHAINNHSKPMEI. WD repeat units lie at residues 180–219, 236–275, 277–316, 319–359, 360–399, 402–450, 453–492, and 494–526; these read GHES…NGGS, PSNK…ASTL, QHKG…AKQQ, FHSA…KTFQ, GHTN…CVHD, AHSK…CIHT, KHQE…LVHS, and RGTG…LDLR. Lysine 290 participates in a covalent cross-link: Glycyl lysine isopeptide (Lys-Gly) (interchain with G-Cter in SUMO2).

The protein belongs to the WD repeat EBI family. As to quaternary structure, homotetramer; dimer of dimers. Component of the N-Cor repressor complex, at least composed of NCOR1, NCOR2, HDAC3, TBL1X, TBL1R, CORO2A and GPS2. Component of a E3 ubiquitin ligase complex containing UBE2D1, SIAH1, CACYBP/SIP, SKP1, APC and TBL1X. Interacts with GPS2 (when sumoylated); leading to protect GPS2 against degradation by the proteasome. Probably part of other corepressor complexes, that do not contain NCOR1 and NCOR2. Interacts with histones H2B, H3a and H4. Interacts with MECP2; recruits TBL1X to the heterochromatin foci. Interacts with USP44. In terms of tissue distribution, expressed in the cochlea.

It is found in the nucleus. F-box-like protein involved in the recruitment of the ubiquitin/19S proteasome complex to nuclear receptor-regulated transcription units. Plays an essential role in transcription activation mediated by nuclear receptors. Probably acts as integral component of corepressor complexes that mediates the recruitment of the 19S proteasome complex, leading to the subsequent proteasomal degradation of transcription repressor complexes, thereby allowing cofactor exchange. The sequence is that of F-box-like/WD repeat-containing protein TBL1X (Tbl1x) from Mus musculus (Mouse).